An 802-amino-acid polypeptide reads, in one-letter code: Oligophrenin-1 (802 aa).

The region spanning 265 to 368 (QPTIEGYLYT…WMEAMDGKEP (104 aa)) is the PH domain. The Rho-GAP domain maps to 380–564 (MELNEVGFKF…ILIEHFGKIY (185 aa)). Disordered stretches follow at residues 641–663 (QKSGEMDPGRKSPSRPVSDCQTE) and 682–802 (TKAI…GDES). Residues 716 to 732 (HHKEGDTDCFSKVRPPG) are compositionally biased toward basic and acidic residues. The segment covering 751–768 (SSTSQKPESKPETVSSNA) has biased composition (polar residues).

As to quaternary structure, interacts with HOMER1. Interacts with AMPA receptor complexes. Interacts with SH3GL2 (endophilin-A1). Interacts (via C-terminus) with NR1D1. In terms of tissue distribution, high expression in brain, particularly in the cerebellum, hippocampus, thalamus, frontal lobes, sensory cortex. Found in the myelin sheaths of peripheral nerves, chromaffin cells within the adrenal medulla, and in extra-adrenal chromaffin cells associated with celiac ganglia.

The protein localises to the postsynapse. Its subcellular location is the presynapse. It localises to the cell projection. The protein resides in the axon. It is found in the dendritic spine. The protein localises to the dendrite. Its subcellular location is the cytoplasm. Its function is as follows. Stimulates GTP hydrolysis of members of the Rho family. Its action on RHOA activity and signaling is implicated in growth and stabilization of dendritic spines, and therefore in synaptic function, in hippocampal neurons. Critical for the stabilization of AMPA receptors at postsynaptic sites. Critical for the regulation of synaptic vesicle endocytosis at pre-synaptic terminals. Required for the localization of NR1D1 to dendrites, can suppress its repressor activity and protect it from proteasomal degradation. This is Oligophrenin-1 (Ophn1) from Rattus norvegicus (Rat).